A 171-amino-acid chain; its full sequence is Phosphinothricin N-acetyltransferase (171 aa).

Residues 7–171 (VQVRPGVEED…WDVAWYERPL (165 aa)) form the N-acetyltransferase domain. Acetyl-CoA contacts are provided by residues 94-96 (VYV), 102-107 (GRGIGS), and N133.

Belongs to the acetyltransferase family. PAT/BAR subfamily.

It catalyses the reaction phosphinothricin + acetyl-CoA = N-acetylphosphinothricin + CoA + H(+). Inactivates phosphinothricin (PPT) by transfer of an acetyl group from acetyl CoA. The physiological substrate could be a structurally related compound. This Streptomyces coelicolor (strain ATCC BAA-471 / A3(2) / M145) protein is Phosphinothricin N-acetyltransferase.